The sequence spans 316 residues: ATP synthase gamma chain (316 aa).

This sequence belongs to the ATPase gamma chain family. In terms of assembly, F-type ATPases have 2 components, CF(1) - the catalytic core - and CF(0) - the membrane proton channel. CF(1) has five subunits: alpha(3), beta(3), gamma(1), delta(1), epsilon(1). CF(0) has three main subunits: a, b and c.

Its subcellular location is the cellular thylakoid membrane. Produces ATP from ADP in the presence of a proton gradient across the membrane. The gamma chain is believed to be important in regulating ATPase activity and the flow of protons through the CF(0) complex. This chain is ATP synthase gamma chain, found in Synechococcus sp. (strain WH7803).